Consider the following 482-residue polypeptide: Catalase (482 aa).

Active-site residues include H53 and N126. Y336 serves as a coordination point for heme.

It belongs to the catalase family. Heme is required as a cofactor.

The protein resides in the periplasm. The catalysed reaction is 2 H2O2 = O2 + 2 H2O. In terms of biological role, decomposes hydrogen peroxide into water and oxygen; serves to protect cells from the toxic effects of hydrogen peroxide. Could protect cells in nodules which have a high potential to produce hydrogen peroxide because of the strong reducing conditions required for nitrogen fixation and the action of several proteins. The sequence is that of Catalase (katA) from Aliivibrio fischeri (strain ATCC 700601 / ES114) (Vibrio fischeri).